A 257-amino-acid polypeptide reads, in one-letter code: MTGTRTFFVGGNHKMNGSKSMLESLSKGMNESVENKENVDIFIAPSYPYLEFLSNKLDNKKFKVCSQNCYSVAKGAFTGEISANMLVDLGIPYVIIGHSERRNVFSESSELITKKTKYAISLGLTVILCLGELLADRKSNNTEHILSEQLKDFASFTPEEWSKIVIAYEPVWAIGTGAVATPQEAQDTHVFIRKWISEKVSEDVAKKTSIMYGGSVNADNCHNLSKQSDIDGFLVGGASLVASDFIAIIKSAVPKKY.

The substrate site is built by Asn12 and Lys14. The active-site Electrophile is His98. The active-site Proton acceptor is the Glu169.

The protein belongs to the triosephosphate isomerase family. Homodimer.

The enzyme catalyses D-glyceraldehyde 3-phosphate = dihydroxyacetone phosphate. The protein operates within carbohydrate biosynthesis; gluconeogenesis. It participates in carbohydrate degradation; glycolysis; D-glyceraldehyde 3-phosphate from glycerone phosphate: step 1/1. The polypeptide is Triosephosphate isomerase (tpiA) (Dictyostelium discoideum (Social amoeba)).